We begin with the raw amino-acid sequence, 428 residues long: Aerobic C4-dicarboxylate transport protein (428 aa).

The next 8 helical transmembrane spans lie at 5 to 27 (LFKS…GHFY), 47 to 64 (MIIA…IAGM), 77 to 99 (ALLY…VNVV), 141 to 163 (VIGA…FGFA), 184 to 206 (VIFG…AMAF), 219 to 241 (LGQL…LGSI), 326 to 348 (IVHQ…GVTG), and 352 to 374 (IVLA…LILG).

This sequence belongs to the dicarboxylate/amino acid:cation symporter (DAACS) (TC 2.A.23) family.

Its subcellular location is the cell inner membrane. In terms of biological role, responsible for the aerobic transport of the dicarboxylates fumarate and malate and to a lesser extent succinate, from the periplasm across the inner membrane. The sequence is that of Aerobic C4-dicarboxylate transport protein from Escherichia coli O157:H7.